The primary structure comprises 267 residues: Thiazole synthase (267 aa).

The active-site Schiff-base intermediate with DXP is the Lys-110. Residues Gly-171, 197 to 198, and 219 to 220 contribute to the 1-deoxy-D-xylulose 5-phosphate site; these read AG and NT.

This sequence belongs to the ThiG family. In terms of assembly, homotetramer. Forms heterodimers with either ThiH or ThiS.

The protein localises to the cytoplasm. The catalysed reaction is [ThiS sulfur-carrier protein]-C-terminal-Gly-aminoethanethioate + 2-iminoacetate + 1-deoxy-D-xylulose 5-phosphate = [ThiS sulfur-carrier protein]-C-terminal Gly-Gly + 2-[(2R,5Z)-2-carboxy-4-methylthiazol-5(2H)-ylidene]ethyl phosphate + 2 H2O + H(+). Its pathway is cofactor biosynthesis; thiamine diphosphate biosynthesis. Functionally, catalyzes the rearrangement of 1-deoxy-D-xylulose 5-phosphate (DXP) to produce the thiazole phosphate moiety of thiamine. Sulfur is provided by the thiocarboxylate moiety of the carrier protein ThiS. In vitro, sulfur can be provided by H(2)S. This Maricaulis maris (strain MCS10) (Caulobacter maris) protein is Thiazole synthase.